Consider the following 601-residue polypeptide: uncharacterized protein (601 aa).

The span at 24–35 (RKSNVVLKKNKG) shows a compositional bias: basic residues. Disordered regions lie at residues 24–106 (RKSN…LKLD) and 171–219 (YGND…PREE). Residues 54–81 (SQFSSRDNFRTTQTQASSSSEPSDNTNR) show a composition bias toward polar residues. Positions 92–106 (TPKKEESNAEKLKLD) are enriched in basic and acidic residues. Residues Ser236 and Ser238 each carry the phosphoserine modification. A disordered region spans residues 260 to 283 (RKRKVLSSSSEDDESSSPEDLLKP).

It localises to the nucleus. This is an uncharacterized protein from Schizosaccharomyces pombe (strain 972 / ATCC 24843) (Fission yeast).